The following is a 217-amino-acid chain: MKFSFAALASAMLLTSTAAFAGIVTSSSNIDFLAIDGQKANKDLLKSTKSFNINESQTHQVVVRVSEIVRHGSDRSLYESDPIVVTFQGTNEDVVISAPKLENERDIKNFKDSPSVIVKTNSGRIIATKQEILKQEGFLPGANLIDTLSEYNASGSVASVSSFATAMPAVALGFTKAQKGKVVVQGENIAEQQLQFWFQQADKETQVRFLNWAKNQK.

Positions 1 to 21 (MKFSFAALASAMLLTSTAAFA) are cleaved as a signal peptide.

This sequence belongs to the UPF0319 family.

The polypeptide is UPF0319 protein HS_1349 (Histophilus somni (strain 129Pt) (Haemophilus somnus)).